Reading from the N-terminus, the 512-residue chain is MGIQAAEISAILKEQIKNFGQAAEVAEVGRVLSVGDGIARVHGLDNVQAGEMVEFPGGIRGMALNLEVDNVGVVIFGDDRSIKEGDTVKRTKSIVDVPAGDALLGRVVDGLGNPIDGKGPIAATERRVADVKAPGIIPRKGVHEPMATGLKSVDAMIPIGRGQRELIIGDRQTGKTAIALDTILNQKSYNEAAGDDESKKLYCIYVAIGQKRSTVAQLVKKLEETGAIAYTLVVAATASDPAPMQFLAPYAATAMAEYFRDNGRHALIIYDDLSKQAVAYRQMSLLLRRPPGREAYPGDVFYLHSRLLERSAKLNKEHGSGSLTALPIIETQGGDVSAFIPTNVISITDGQIFLETELFYQGIRPAVNTGLSVSRVGSSAQTDAMKSVAGPVKLELAQYREMAAFAQFGSDLDAATQQLLNRGARLTELMKQPQYAPLTNAEIVCVIFAGTKGYLDKVPVKDVGRWEQGLLKHLRTNARDLLADITNNDRKVKGELENKIRAALDTYAKDFA.

169-176 (GDRQTGKT) contacts ATP.

Belongs to the ATPase alpha/beta chains family. As to quaternary structure, F-type ATPases have 2 components, CF(1) - the catalytic core - and CF(0) - the membrane proton channel. CF(1) has five subunits: alpha(3), beta(3), gamma(1), delta(1), epsilon(1). CF(0) has four main subunits: a(1), b(1), b'(1) and c(9-12).

Its subcellular location is the cell inner membrane. It catalyses the reaction ATP + H2O + 4 H(+)(in) = ADP + phosphate + 5 H(+)(out). Functionally, produces ATP from ADP in the presence of a proton gradient across the membrane. The alpha chain is a regulatory subunit. In Cereibacter sphaeroides (strain ATCC 17025 / ATH 2.4.3) (Rhodobacter sphaeroides), this protein is ATP synthase subunit alpha.